We begin with the raw amino-acid sequence, 251 residues long: Capsid protein (251 aa).

The short motif at 3–20 (KRDAPWRLTAGTAKISRT) is the Bipartite nuclear localization signal element. A Nuclear localization signal motif is present at residues 35–49 (RASAWVNRPMYRKPR). A zinc finger spans residues 63 to 80 (CEGPCKVQSFEQRHDVSH). Positions 96-117 (ITHRVGKRFCVKSVYILGKIWM) match the Nuclear export signal motif. The short motif at 195-242 (RRFWKVNNHVVYNHQEAGKYENHTENALLLYMACTHASNPVYATLKIR) is the Bipartite nuclear localization signal element.

It belongs to the geminiviridae capsid protein family. As to quaternary structure, homomultimer. Binds to single-stranded and double-stranded viral DNA. Interacts (via nuclear localization signals) with host importin alpha-1a.

Its subcellular location is the virion. The protein resides in the host nucleus. Encapsidates the viral DNA into characteristic twinned ('geminate') particles. Binds the genomic viral ssDNA and shuttles it into and out of the cell nucleus. The CP of bipartite geminiviruses is not required for cell-to-cell or systemic movement. This Capsicum annuum (Capsicum pepper) protein is Capsid protein.